The sequence spans 307 residues: Acetyl-coenzyme A carboxylase carboxyl transferase subunit beta (307 aa).

Positions Leu25–Pro294 constitute a CoA carboxyltransferase N-terminal domain.

The protein belongs to the AccD/PCCB family. Acetyl-CoA carboxylase is a heterohexamer composed of biotin carboxyl carrier protein (AccB), biotin carboxylase (AccC) and two subunits each of ACCase subunit alpha (AccA) and ACCase subunit beta (AccD).

The protein localises to the cytoplasm. It catalyses the reaction N(6)-carboxybiotinyl-L-lysyl-[protein] + acetyl-CoA = N(6)-biotinyl-L-lysyl-[protein] + malonyl-CoA. It functions in the pathway lipid metabolism; malonyl-CoA biosynthesis; malonyl-CoA from acetyl-CoA: step 1/1. Component of the acetyl coenzyme A carboxylase (ACC) complex. Biotin carboxylase (BC) catalyzes the carboxylation of biotin on its carrier protein (BCCP) and then the CO(2) group is transferred by the transcarboxylase to acetyl-CoA to form malonyl-CoA. This is Acetyl-coenzyme A carboxylase carboxyl transferase subunit beta from Chelativorans sp. (strain BNC1).